We begin with the raw amino-acid sequence, 326 residues long: DNA-directed RNA polymerase subunit alpha (326 aa).

Positions 1–231 (MQTNLLKPKI…DQLVVFAALE (231 aa)) are alpha N-terminal domain (alpha-NTD). An alpha C-terminal domain (alpha-CTD) region spans residues 247–326 (VDPMLMRPVD…ESWPPANLEK (80 aa)).

Belongs to the RNA polymerase alpha chain family. Homodimer. The RNAP catalytic core consists of 2 alpha, 1 beta, 1 beta' and 1 omega subunit. When a sigma factor is associated with the core the holoenzyme is formed, which can initiate transcription.

The enzyme catalyses RNA(n) + a ribonucleoside 5'-triphosphate = RNA(n+1) + diphosphate. Its function is as follows. DNA-dependent RNA polymerase catalyzes the transcription of DNA into RNA using the four ribonucleoside triphosphates as substrates. This chain is DNA-directed RNA polymerase subunit alpha, found in Polynucleobacter necessarius subsp. necessarius (strain STIR1).